Consider the following 681-residue polypeptide: Rabphilin-3A (681 aa).

The interval 1 to 21 (MTDTVVNRWMYPGDGPLQSND) is disordered. The region spanning 40–157 (QRKQEELTDE…KRSGAWFFKG (118 aa)) is the RabBD domain. The FYVE-type zinc finger occupies 88-145 (GDGVNRCILCGEQLGMLGSACVVCEDCKKNVCTKCGVETSNNRPHPVWLCKICLEQRE). Zn(2+) contacts are provided by cysteine 94, cysteine 97, cysteine 111, cysteine 114, cysteine 119, cysteine 122, cysteine 137, and cysteine 140. The segment at 162–375 (VLPQPMPIKK…EEEANSYDSD (214 aa)) is disordered. Over residues 199 to 208 (ARGDMEDRRP) the composition is skewed to basic and acidic residues. Arginine 223 carries the omega-N-methylarginine modification. Residues 243 to 252 (RDSEGWDHAH) show a composition bias toward basic and acidic residues. Serine 271 carries the post-translational modification Phosphoserine. Residues 278 to 296 (APAPVPSPAPPQPVQPGPP) show a composition bias toward pro residues. Low complexity predominate over residues 347-356 (AAPYSQAAPA). Acidic residues predominate over residues 362–375 (AEEEEEEANSYDSD). The C2 1 domain occupies 379–501 (TLGALEFSLL…KANQRKNFNI (123 aa)). Methionine 409, aspartate 410, aspartate 416, aspartate 471, glutamate 472, aspartate 473, glutamate 479, glutamate 526, aspartate 568, aspartate 574, aspartate 628, tyrosine 629, aspartate 630, and aspartate 636 together coordinate Ca(2+). The 134-residue stretch at 537–670 (ERGKILVSLM…NKDKKIERWH (134 aa)) folds into the C2 2 domain. Phosphoserine occurs at positions 679 and 680.

In terms of assembly, interacts with RAB3B, RAB3C, RAB3D, RAB8A, RAB27A and RAB27B. Interacts with RAB3A; this interaction recruits RPH3A to synaptic vesicules. Interacts (via C2B domain) with SNAP25. Interacts with deubiquitinating enzyme CAND1; this interaction results in the deubiquitination of RPH3A. Interacts with GRIN2A and DLG4; this ternary complex regulates NMDA receptor composition at postsynaptic membranes. Interacts with SNCA. Requires Ca(2+) as cofactor. Post-translationally, ubiquitinated. Deubiquitinated by CAND1 to prevent its degradation. In terms of tissue distribution, specifically expressed in brain.

The protein resides in the cytoplasmic vesicle. The protein localises to the secretory vesicle. It localises to the synaptic vesicle membrane. Its subcellular location is the cell projection. It is found in the dendritic spine. The protein resides in the postsynaptic cell membrane. The protein localises to the membrane. Its function is as follows. Plays an essential role in docking and fusion steps of regulated exocytosis. At the presynaptic level, RPH3A is recruited by RAB3A to the synaptic vesicle membrane in a GTP-dependent manner where it modulates synaptic vesicle trafficking and calcium-triggered neurotransmitter release. In the post-synaptic compartment, forms a ternary complex with GRIN2A and DLG4 and regulates NMDA receptor stability. Also plays a role in the exocytosis of arginine vasopressin hormone. This chain is Rabphilin-3A (Rph3a), found in Mus musculus (Mouse).